A 357-amino-acid polypeptide reads, in one-letter code: NAD-dependent protein deacetylase HST2 (357 aa).

Residue serine 2 is modified to N-acetylserine. Residues 5-284 (TASTEMSVRK…EQLVEELGWQ (280 aa)) form the Deacetylase sirtuin-type domain. NAD(+) contacts are provided by residues 32-52 (GAGI…TGLY) and 115-118 (QNID). Histidine 135 functions as the Proton acceptor in the catalytic mechanism. The Zn(2+) site is built by cysteine 143, cysteine 146, cysteine 170, and cysteine 173. NAD(+) contacts are provided by residues 223 to 225 (GTS), 248 to 250 (NLE), and serine 270. Positions 317–329 (LDQSEHESADKKD) are enriched in basic and acidic residues. The tract at residues 317-357 (LDQSEHESADKKDKKLQRLNGHDSDEDGASNSSSSQKAAKE) is disordered. At serine 340 the chain carries Phosphoserine.

It belongs to the sirtuin family. Class I subfamily. As to quaternary structure, homotrimer. Monomer. Homotrimeric in its unliganded state. Undergoes a trimer-monomer transition upon acetyl-lysine substrate binding. The cofactor is Zn(2+).

The protein resides in the cytoplasm. It is found in the nucleus. It catalyses the reaction N(6)-acetyl-L-lysyl-[protein] + NAD(+) + H2O = 2''-O-acetyl-ADP-D-ribose + nicotinamide + L-lysyl-[protein]. With respect to regulation, inhibited by ADP-ribose and nicotinamide. In terms of biological role, NAD-dependent histone deacetylase that is involved in nuclear silencing events. Derepresses subtelomeric silencing and increases repression in nucleolar (rDNA) silencing. Its function is negatively regulated by active nuclear export. In Saccharomyces cerevisiae (strain ATCC 204508 / S288c) (Baker's yeast), this protein is NAD-dependent protein deacetylase HST2 (HST2).